A 138-amino-acid polypeptide reads, in one-letter code: ATP synthase epsilon chain (138 aa).

It belongs to the ATPase epsilon chain family. As to quaternary structure, F-type ATPases have 2 components, CF(1) - the catalytic core - and CF(0) - the membrane proton channel. CF(1) has five subunits: alpha(3), beta(3), gamma(1), delta(1), epsilon(1). CF(0) has three main subunits: a, b and c.

It is found in the cell inner membrane. Functionally, produces ATP from ADP in the presence of a proton gradient across the membrane. The protein is ATP synthase epsilon chain of Polaromonas naphthalenivorans (strain CJ2).